Here is a 477-residue protein sequence, read N- to C-terminus: Bifunctional protein HldE (477 aa).

Positions 1–318 (MKVNLPAFER…ENAVRGRADT (318 aa)) are ribokinase. An ATP-binding site is contributed by 195-198 (NLSE). Residue Asp264 is part of the active site. Residues 344–477 (MTNGVFDILH…IKKIQTESEK (134 aa)) form a cytidylyltransferase region.

The protein in the N-terminal section; belongs to the carbohydrate kinase PfkB family. It in the C-terminal section; belongs to the cytidylyltransferase family. As to quaternary structure, homodimer.

The enzyme catalyses D-glycero-beta-D-manno-heptose 7-phosphate + ATP = D-glycero-beta-D-manno-heptose 1,7-bisphosphate + ADP + H(+). It carries out the reaction D-glycero-beta-D-manno-heptose 1-phosphate + ATP + H(+) = ADP-D-glycero-beta-D-manno-heptose + diphosphate. Its pathway is nucleotide-sugar biosynthesis; ADP-L-glycero-beta-D-manno-heptose biosynthesis; ADP-L-glycero-beta-D-manno-heptose from D-glycero-beta-D-manno-heptose 7-phosphate: step 1/4. It participates in nucleotide-sugar biosynthesis; ADP-L-glycero-beta-D-manno-heptose biosynthesis; ADP-L-glycero-beta-D-manno-heptose from D-glycero-beta-D-manno-heptose 7-phosphate: step 3/4. Functionally, catalyzes the phosphorylation of D-glycero-D-manno-heptose 7-phosphate at the C-1 position to selectively form D-glycero-beta-D-manno-heptose-1,7-bisphosphate. Catalyzes the ADP transfer from ATP to D-glycero-beta-D-manno-heptose 1-phosphate, yielding ADP-D-glycero-beta-D-manno-heptose. The protein is Bifunctional protein HldE of Salmonella enteritidis PT4 (strain P125109).